The following is a 125-amino-acid chain: Large ribosomal subunit protein uL22 (125 aa).

This sequence belongs to the universal ribosomal protein uL22 family. As to quaternary structure, part of the 50S ribosomal subunit.

In terms of biological role, this protein binds specifically to 23S rRNA; its binding is stimulated by other ribosomal proteins, e.g. L4, L17, and L20. It is important during the early stages of 50S assembly. It makes multiple contacts with different domains of the 23S rRNA in the assembled 50S subunit and ribosome. Its function is as follows. The globular domain of the protein is located near the polypeptide exit tunnel on the outside of the subunit, while an extended beta-hairpin is found that lines the wall of the exit tunnel in the center of the 70S ribosome. This is Large ribosomal subunit protein uL22 from Erythrobacter litoralis (strain HTCC2594).